The chain runs to 262 residues: MSGDSVTALPGGSLNWIAVWRRNYIAWKKAALASLLGHLAEPLIYLFGLGAGLGVMVGRVGGVSYTAFLAAGMVATSAMTAATFETIYAAFGRMEGQRTWEAMLYTQLRLGDIVLGEMAWAATKAALAGAGIGVVAAALGYTQWLSLLYALPVIALTGLAFASLGMVVTALAPSYDYFIFYQTLVITPILFLSGAVFPVDQLPIVFQTAARFLPLSHSIDLIRPIMLGHPVVDVCQHVGALCIYIVIPFFLSTALLRRRLLR.

Residues 33–259 (ASLLGHLAEP…FLSTALLRRR (227 aa)) enclose the ABC transmembrane type-2 domain. Helical transmembrane passes span 35–55 (LLGHLAEPLIYLFGLGAGLGV), 60–80 (VGGVSYTAFLAAGMVATSAMT), 125–145 (AALAGAGIGVVAAALGYTQWL), 148–168 (LYALPVIALTGLAFASLGMVV), 177–197 (YFIFYQTLVITPILFLSGAVF), and 231–251 (VVDVCQHVGALCIYIVIPFFL).

This sequence belongs to the ABC-2 integral membrane protein family. Lipooligosaccharide exporter (TC 3.A.1.102) subfamily. As to quaternary structure, the complex is composed of two ATP-binding proteins (NodI) and two transmembrane proteins (NodJ).

The protein localises to the cell inner membrane. Part of the ABC transporter complex NodIJ involved in the export of the nodulation factors (Nod factors), the bacterial signal molecules that induce symbiosis and subsequent nodulation induction. Nod factors are LCO (lipo-chitin oligosaccharide), a modified beta-1,4-linked N-acetylglucosamine oligosaccharide. This subunit encodes the transporter. The protein is Nodulation protein J (nodJ) of Rhizobium leguminosarum bv. trifolii.